The following is a 487-amino-acid chain: uncharacterized protein (487 aa).

The next 3 membrane-spanning stretches (helical) occupy residues alanine 10–alanine 30, valine 45–alanine 65, and alanine 439–leucine 459.

The protein localises to the cell membrane. This is an uncharacterized protein from Mycobacterium tuberculosis (strain CDC 1551 / Oshkosh).